The chain runs to 197 residues: ATP-dependent Clp protease proteolytic subunit (197 aa).

Ser-97 (nucleophile) is an active-site residue. The active site involves His-122.

It belongs to the peptidase S14 family. Fourteen ClpP subunits assemble into 2 heptameric rings which stack back to back to give a disk-like structure with a central cavity, resembling the structure of eukaryotic proteasomes.

It localises to the cytoplasm. The enzyme catalyses Hydrolysis of proteins to small peptides in the presence of ATP and magnesium. alpha-casein is the usual test substrate. In the absence of ATP, only oligopeptides shorter than five residues are hydrolyzed (such as succinyl-Leu-Tyr-|-NHMec, and Leu-Tyr-Leu-|-Tyr-Trp, in which cleavage of the -Tyr-|-Leu- and -Tyr-|-Trp bonds also occurs).. Cleaves peptides in various proteins in a process that requires ATP hydrolysis. Has a chymotrypsin-like activity. Plays a major role in the degradation of misfolded proteins. The polypeptide is ATP-dependent Clp protease proteolytic subunit (Trichlorobacter lovleyi (strain ATCC BAA-1151 / DSM 17278 / SZ) (Geobacter lovleyi)).